Here is a 66-residue protein sequence, read N- to C-terminus: Beta-toxin Chui2 (66 aa).

Residues lysine 1–asparagine 66 enclose the LCN-type CS-alpha/beta domain. 4 cysteine pairs are disulfide-bonded: cysteine 12-cysteine 65, cysteine 16-cysteine 41, cysteine 25-cysteine 46, and cysteine 29-cysteine 48. Asparagine 66 is modified (asparagine amide).

The protein belongs to the long (4 C-C) scorpion toxin superfamily. Sodium channel inhibitor family. Beta subfamily. As to expression, expressed by the venom gland.

It localises to the secreted. Beta toxins bind voltage-independently at site-4 of sodium channels (Nav) and shift the voltage of activation toward more negative potentials thereby affecting sodium channel activation and promoting spontaneous and repetitive firing. The polypeptide is Beta-toxin Chui2 (Centruroides huichol (Scorpion)).